The primary structure comprises 247 residues: Ribonuclease 3 (247 aa).

Positions 23 to 149 (HADLLERLGV…LLGAIFRQHG (127 aa)) constitute an RNase III domain. Glu62 is a binding site for Mg(2+). Asp66 is an active-site residue. 2 residues coordinate Mg(2+): Asp135 and Glu138. Glu138 is a catalytic residue. In terms of domain architecture, DRBM spans 176-244 (DWKTTLQEEL…ARQAFLKLRE (69 aa)).

Belongs to the ribonuclease III family. In terms of assembly, homodimer. Mg(2+) serves as cofactor.

The protein localises to the cytoplasm. It catalyses the reaction Endonucleolytic cleavage to 5'-phosphomonoester.. In terms of biological role, digests double-stranded RNA. Involved in the processing of primary rRNA transcript to yield the immediate precursors to the large and small rRNAs (23S and 16S). Processes some mRNAs, and tRNAs when they are encoded in the rRNA operon. Processes pre-crRNA and tracrRNA of type II CRISPR loci if present in the organism. The protein is Ribonuclease 3 of Corynebacterium efficiens (strain DSM 44549 / YS-314 / AJ 12310 / JCM 11189 / NBRC 100395).